The chain runs to 190 residues: Nucleoside triphosphate pyrophosphatase (190 aa).

D69 (proton acceptor) is an active-site residue.

Belongs to the Maf family. It depends on a divalent metal cation as a cofactor.

Its subcellular location is the cytoplasm. The catalysed reaction is a ribonucleoside 5'-triphosphate + H2O = a ribonucleoside 5'-phosphate + diphosphate + H(+). It catalyses the reaction a 2'-deoxyribonucleoside 5'-triphosphate + H2O = a 2'-deoxyribonucleoside 5'-phosphate + diphosphate + H(+). Its function is as follows. Nucleoside triphosphate pyrophosphatase. May have a dual role in cell division arrest and in preventing the incorporation of modified nucleotides into cellular nucleic acids. This is Nucleoside triphosphate pyrophosphatase from Helicobacter pylori (strain HPAG1).